The sequence spans 340 residues: Methionine import ATP-binding protein MetN 2 (340 aa).

Residues 2–241 enclose the ABC transporter domain; it reads ITLQNVVKEY…PQEKVTQRFV (240 aa). 38–45 lines the ATP pocket; the sequence is GYSGAGKS.

The protein belongs to the ABC transporter superfamily. Methionine importer (TC 3.A.1.24) family. In terms of assembly, the complex is composed of two ATP-binding proteins (MetN), two transmembrane proteins (MetI) and a solute-binding protein (MetQ).

It is found in the cell membrane. The catalysed reaction is L-methionine(out) + ATP + H2O = L-methionine(in) + ADP + phosphate + H(+). It catalyses the reaction D-methionine(out) + ATP + H2O = D-methionine(in) + ADP + phosphate + H(+). Functionally, part of the ABC transporter complex MetNIQ involved in methionine import. Responsible for energy coupling to the transport system. In Listeria monocytogenes serovar 1/2a (strain ATCC BAA-679 / EGD-e), this protein is Methionine import ATP-binding protein MetN 2.